Reading from the N-terminus, the 432-residue chain is Ribosomal protein uS12 methylthiotransferase RimO (432 aa).

Positions 4–122 (NKVDIITLGC…LISDLGKSYH (119 aa)) constitute an MTTase N-terminal domain. [4Fe-4S] cluster is bound by residues cysteine 13, cysteine 51, cysteine 85, cysteine 146, cysteine 150, and cysteine 153. The Radical SAM core domain occupies 132 to 363 (TTPRHYAYVK…MRVQEGISAD (232 aa)). One can recognise a TRAM domain in the interval 366-432 (ASKVGQTFRV…AFDLYGKVLN (67 aa)).

This sequence belongs to the methylthiotransferase family. RimO subfamily. Requires [4Fe-4S] cluster as cofactor.

The protein resides in the cytoplasm. It catalyses the reaction L-aspartate(89)-[ribosomal protein uS12]-hydrogen + (sulfur carrier)-SH + AH2 + 2 S-adenosyl-L-methionine = 3-methylsulfanyl-L-aspartate(89)-[ribosomal protein uS12]-hydrogen + (sulfur carrier)-H + 5'-deoxyadenosine + L-methionine + A + S-adenosyl-L-homocysteine + 2 H(+). Its function is as follows. Catalyzes the methylthiolation of an aspartic acid residue of ribosomal protein uS12. This chain is Ribosomal protein uS12 methylthiotransferase RimO, found in Parabacteroides distasonis (strain ATCC 8503 / DSM 20701 / CIP 104284 / JCM 5825 / NCTC 11152).